Reading from the N-terminus, the 976-residue chain is Dolichyl-phosphooligosaccharide-protein glycotransferase 1 (976 aa).

Residues 1–21 (MVKSKVKKVEKGKEGEEKRST) are Cytoplasmic-facing. Residues 22-42 (YVLLKKVLIPILVFGFAIYAF) form a helical membrane-spanning segment. Residues 43 to 112 (YLRHLTAGKY…KVVSLFGYNE (70 aa)) lie on the Extracellular side of the membrane. The DXD motif 1 signature appears at 55–57 (DPD). Position 57 (Asp57) interacts with Mn(2+). A helical transmembrane segment spans residues 113-133 (LQAFLLWPPFVGFLGVIAVYL). The Cytoplasmic portion of the chain corresponds to 134–135 (LG). A helical membrane pass occupies residues 136–156 (RKVLNEWTGLWGAVVLTVSTA). The Extracellular segment spans residues 157-165 (NFSRTFSGN). The chain crosses the membrane as a helical span at residues 166–186 (ARGDGPFMALFIFASVAMLYY). Residues Arg167 and Asp169 each coordinate Mn(2+). The short motif at 167–169 (RGD) is the DXD motif 2 element. The Cytoplasmic portion of the chain corresponds to 187-193 (LKESNKT). Residues 194-214 (RKIIYGTLFVLLTVISLGAWN) traverse the membrane as a helical segment. Gly215 is a topological domain (extracellular). A helical transmembrane segment spans residues 216-236 (SPFGLMVLLGFASLQTIILFI). Residues 237 to 247 (FGKLEELKKFV) lie on the Cytoplasmic side of the membrane. Residues 248 to 268 (KEFYPAYLAILAFGYALTFPG) form a helical membrane-spanning segment. Ile269 is a topological domain (extracellular). A helical transmembrane segment spans residues 270 to 290 (VKIGGFIRFAFEVFLGLIFLL). The Cytoplasmic portion of the chain corresponds to 291-306 (VIMLYGGRYLNYSDKK). The chain crosses the membrane as a helical span at residues 307-327 (HRFLVVTIIVLLGFGGAYAYV). Residues 328–360 (GPKLFRLMGGAYQSTQVYETVQELAKTTIGDVK) lie on the Extracellular side of the membrane. The short motif at 347–350 (TVQE) is the TIXE motif element. The chain crosses the membrane as a helical span at residues 361–381 (AYYGVESGNGLIFFLSIPGLL). Residues 382–396 (ILLTKYLYDLFKKAK) lie on the Cytoplasmic side of the membrane. Residues 397-417 (SDNETLFALVFYTMSLYLLYL) form a helical membrane-spanning segment. A topological domain (extracellular) is located at residue Ala418. A helical membrane pass occupies residues 419–439 (VRFLFLASYAVALFFGIFIGF). Arg420 is a binding site for a glycophospholipid. Topologically, residues 440 to 453 (SMDVIEKMKENIGI) are cytoplasmic. Residues 454-474 (KAALGIVLSLMILVIPFVHAP) form a helical membrane-spanning segment. At 475–976 (VLARSARALK…SASAPHHSSE (502 aa)) the chain is on the extracellular side. Positions 513–515 (WWD) are interacts with target acceptor peptide in protein substrate. The WWDYG motif signature appears at 513-517 (WWDYG). Tyr518 is an a glycophospholipid binding site. The short motif at 573–580 (DWAKFNAI) is the DK motif element.

Belongs to the STT3 family. The cofactor is Mn(2+). Mg(2+) is required as a cofactor.

The protein localises to the cell membrane. It catalyses the reaction an archaeal dolichyl phosphooligosaccharide + [protein]-L-asparagine = an archaeal dolichyl phosphate + a glycoprotein with the oligosaccharide chain attached by N-beta-D-glycosyl linkage to a protein L-asparagine.. It functions in the pathway protein modification; protein glycosylation. In terms of biological role, oligosaccharyl transferase (OST) that catalyzes the initial transfer of a defined glycan (ManNAcXyl(2)GlcAMan(2)GalNAc in Pyrococcus) from the lipid carrier dolichol-monophosphate to an asparagine residue within an Asn-X-Ser/Thr consensus motif in nascent polypeptide chains, the first step in protein N-glycosylation. This chain is Dolichyl-phosphooligosaccharide-protein glycotransferase 1 (aglB1), found in Pyrococcus horikoshii (strain ATCC 700860 / DSM 12428 / JCM 9974 / NBRC 100139 / OT-3).